The sequence spans 866 residues: Replication factor C small subunit (866 aa).

One can recognise a DOD-type homing endonuclease domain in the interval Trp-183–Ile-313.

The protein belongs to the activator 1 small subunits family. RfcS subfamily. As to quaternary structure, heteromultimer composed of small subunits (RfcS) and large subunits (RfcL). Post-translationally, this protein undergoes a protein self splicing that involves a post-translational excision of the intervening region (intein) followed by peptide ligation.

Functionally, part of the RFC clamp loader complex which loads the PCNA sliding clamp onto DNA. The protein is Replication factor C small subunit (rfcS) of Thermococcus kodakarensis (strain ATCC BAA-918 / JCM 12380 / KOD1) (Pyrococcus kodakaraensis (strain KOD1)).